Here is a 270-residue protein sequence, read N- to C-terminus: Putative pyruvate, phosphate dikinase regulatory protein (270 aa).

149–156 (GVSRTSKT) contacts ADP.

The protein belongs to the pyruvate, phosphate/water dikinase regulatory protein family. PDRP subfamily.

It carries out the reaction N(tele)-phospho-L-histidyl/L-threonyl-[pyruvate, phosphate dikinase] + ADP = N(tele)-phospho-L-histidyl/O-phospho-L-threonyl-[pyruvate, phosphate dikinase] + AMP + H(+). The enzyme catalyses N(tele)-phospho-L-histidyl/O-phospho-L-threonyl-[pyruvate, phosphate dikinase] + phosphate + H(+) = N(tele)-phospho-L-histidyl/L-threonyl-[pyruvate, phosphate dikinase] + diphosphate. Bifunctional serine/threonine kinase and phosphorylase involved in the regulation of the pyruvate, phosphate dikinase (PPDK) by catalyzing its phosphorylation/dephosphorylation. The protein is Putative pyruvate, phosphate dikinase regulatory protein of Thermoanaerobacter pseudethanolicus (strain ATCC 33223 / 39E) (Clostridium thermohydrosulfuricum).